Here is a 396-residue protein sequence, read N- to C-terminus: MGPFCLGCSHRKCYSPIRNLISQETFKFHFKNLGYAKGRKDTFLCYEVTRKDCDSPVSLHHGVFKNKGNIHAEVCFLYWFHDKVLKVLSPREEFKITWYMSWSPCFECAEQIVRFLATHHYLSLDIFSSRLYNVQDPETQQNLCRLVQEGAQVAAMDLYEFKKCWKKFVTMVAGDSGLGKRLLTNFRYQDSKLQEILRRMDPLSEEEFYSQFYNQRVKHLCYYHRMKPYLCYQLEQFNGQAPLKGCLLSEKGKQHAEILFLDKIRSMELSQVTITCYLTWSPCPNCAWRLAAFKRDRPDLILHIYTSRLYFHWKRPFQKGLCSLWQSGILVDVMDLPQFTDCWTNFVNPKRPFWPWKGLEIISRRTQRRLRRIKESWGLQDLVNDFGNLQLGPPMS.

2 CMP/dCMP-type deaminase domains span residues 38–154 and 205–324; these read GRKD…AQVA and EEEF…LCSL. Histidine 71 contributes to the Zn(2+) binding site. Glutamate 73 serves as the catalytic Proton donor. Zn(2+) contacts are provided by cysteine 105, cysteine 108, histidine 255, cysteine 283, and cysteine 286.

This sequence belongs to the cytidine and deoxycytidylate deaminase family. In terms of assembly, homodimer. Zn(2+) is required as a cofactor.

Its subcellular location is the cytoplasm. It carries out the reaction a 2'-deoxycytidine in single-stranded DNA + H2O + H(+) = a 2'-deoxyuridine in single-stranded DNA + NH4(+). DNA deaminase (cytidine deaminase) which acts as an inhibitor of retrovirus replication and retrotransposon mobility via deaminase-dependent and -independent mechanisms. Selectively targets single-stranded DNA and does not deaminate double-stranded DNA or single- or double-stranded RNA. This is DNA dC-&gt;dU-editing enzyme APOBEC3 (APOBEC3) from Cricetulus longicaudatus (Long-tailed dwarf hamster).